The primary structure comprises 60 residues: Large ribosomal subunit protein bL33 (60 aa).

Belongs to the bacterial ribosomal protein bL33 family.

This Chlorobium phaeovibrioides (strain DSM 265 / 1930) (Prosthecochloris vibrioformis (strain DSM 265)) protein is Large ribosomal subunit protein bL33.